A 297-amino-acid chain; its full sequence is MTQSTAQILDGKATAAAIKAELTTRVSVLAAKGIVPGLGTILVGSDPGSTWYVGGKHKDCAEVGIQSIRRDLPEDISQEDLLEVVRELNDNPECTGYIVQLPLPKHIDQDVILEAMDPDKDADGLHPMNLGRLVANVNGEMKSPLPCTPKGCVELLRRHNIELKGKRVLVVGRGVTIGRPIGLLLTRKEVNATVILAHTGTVDLPAELKQADVVIAAAGVPHMIKAEDLKPGAVVLDVGVSRVDDGNGKAVVTGDVDPAAADVAAWLSPNPGGVGPMTRAMLLANVVESAERQAGIA.

NADP(+) contacts are provided by residues 172-174, Thr-199, and Val-240; that span reads GRG.

Belongs to the tetrahydrofolate dehydrogenase/cyclohydrolase family. As to quaternary structure, homodimer.

The catalysed reaction is (6R)-5,10-methylene-5,6,7,8-tetrahydrofolate + NADP(+) = (6R)-5,10-methenyltetrahydrofolate + NADPH. It catalyses the reaction (6R)-5,10-methenyltetrahydrofolate + H2O = (6R)-10-formyltetrahydrofolate + H(+). The protein operates within one-carbon metabolism; tetrahydrofolate interconversion. Its function is as follows. Catalyzes the oxidation of 5,10-methylenetetrahydrofolate to 5,10-methenyltetrahydrofolate and then the hydrolysis of 5,10-methenyltetrahydrofolate to 10-formyltetrahydrofolate. This is Bifunctional protein FolD 2 from Paenarthrobacter aurescens (strain TC1).